The sequence spans 210 residues: Redox-sensing transcriptional repressor Rex (210 aa).

The segment at residues 17–56 (KYHRYLNELMKNDVDRISSKELGEKIGFTASQIRQDLNCF) is a DNA-binding region (H-T-H motif). Residue 91-96 (GAGNIG) participates in NAD(+) binding.

The protein belongs to the transcriptional regulatory Rex family. Homodimer.

Its subcellular location is the cytoplasm. Its function is as follows. Modulates transcription in response to changes in cellular NADH/NAD(+) redox state. The chain is Redox-sensing transcriptional repressor Rex from Clostridium botulinum (strain Eklund 17B / Type B).